A 328-amino-acid polypeptide reads, in one-letter code: Ribosomal RNA small subunit methyltransferase H (328 aa).

S-adenosyl-L-methionine contacts are provided by residues 37 to 39, aspartate 57, phenylalanine 83, aspartate 104, and glutamine 111; that span reads GGH.

This sequence belongs to the methyltransferase superfamily. RsmH family.

The protein resides in the cytoplasm. It catalyses the reaction cytidine(1402) in 16S rRNA + S-adenosyl-L-methionine = N(4)-methylcytidine(1402) in 16S rRNA + S-adenosyl-L-homocysteine + H(+). Specifically methylates the N4 position of cytidine in position 1402 (C1402) of 16S rRNA. The chain is Ribosomal RNA small subunit methyltransferase H from Neisseria meningitidis serogroup C / serotype 2a (strain ATCC 700532 / DSM 15464 / FAM18).